The following is a 205-amino-acid chain: DNA-directed RNA polymerases IV and V subunit 4 (205 aa).

Residues 1–79 (MSEKGGKGLK…TKSSKNSLHS (79 aa)) form a disordered region. Residues 48–60 (NVSSDQQPFQSSA) are compositionally biased toward polar residues.

This sequence belongs to the eukaryotic RPB4 RNA polymerase subunit family. As to quaternary structure, component of the RNA polymerase IV and V complexes. Interacts with NRPD1 and NRPE1. Expressed in shoot meristematic region and in root tips. Detected in cotyledons, flowers and young leaves.

Its subcellular location is the nucleus. In terms of biological role, DNA-dependent RNA polymerase catalyzes the transcription of DNA into RNA using the four ribonucleoside triphosphates as substrates. Component of RNA polymerases IV and V which mediate short-interfering RNAs (siRNA) accumulation and subsequent RNA-directed DNA methylation-dependent (RdDM) transcriptional gene silencing (TGS) of endogenous repeated sequences, including transposable elements. Required for the de novo DNA methylation directed by the RdDM pathway. This chain is DNA-directed RNA polymerases IV and V subunit 4 (NRPD4), found in Arabidopsis thaliana (Mouse-ear cress).